A 230-amino-acid chain; its full sequence is Cytidylate kinase (230 aa).

17-25 lines the ATP pocket; that stretch reads GPTASGKGT.

Belongs to the cytidylate kinase family. Type 1 subfamily.

It localises to the cytoplasm. The enzyme catalyses CMP + ATP = CDP + ADP. The catalysed reaction is dCMP + ATP = dCDP + ADP. The protein is Cytidylate kinase of Ralstonia nicotianae (strain ATCC BAA-1114 / GMI1000) (Ralstonia solanacearum).